Here is a 252-residue protein sequence, read N- to C-terminus: Transmembrane ascorbate-dependent reductase CYB561 (252 aa).

Position 1 is an N-acetylmethionine (M1). The Cytoplasmic portion of the chain corresponds to 1-17 (MEGPASPARAPGALPYY). Residues 18-38 (VAFSQLLGLIVVAMTGAWLGM) form a helical membrane-spanning segment. Positions 20–221 (FSQLLGLIVV…FATVILYILT (202 aa)) constitute a Cytochrome b561 domain. The Vesicular segment spans residues 39-52 (YRGGIAWESALQFN). The helical transmembrane segment at 53-73 (VHPLCMIIGLVFLQGDALLVY) threads the bilayer. Positions 54, 74, and 81 each coordinate heme b. At 74 to 86 (RVFRNEAKRTTKV) the chain is on the cytoplasmic side. Residues K81 and K85 each contribute to the L-ascorbate site. A helical transmembrane segment spans residues 87–107 (LHGLLHVFAFVIALVGLVAVF). Heme b-binding positions include H88, 117–120 (DLYS), and H122. The Vesicular portion of the chain corresponds to 108 to 125 (EHHRKKGYADLYSLHSWC). Residues 126 to 146 (GILVFALFFAQWLVGFSFFLF) form a helical membrane-spanning segment. The Cytoplasmic segment spans residues 147-159 (PGASFSLRSRYRP). An L-ascorbate-binding site is contributed by R154. Residues 160–180 (QHVFFGAAIFLLSVATALLGL) form a helical membrane-spanning segment. H161 and E182 together coordinate heme b. Over 181–199 (KEALLFELGTKYSMFEPEG) the chain is Vesicular. The chain crosses the membrane as a helical span at residues 200–220 (VLANVLGLLLATFATVILYIL). Residues 221-252 (TRADWKRPLQAEEQALSMDFKTLTEGDSPSSQ) lie on the Cytoplasmic side of the membrane. Position 226 (K226) interacts with heme b. Residues S248 and S250 each carry the phosphoserine modification.

Heme b is required as a cofactor. Expressed in the adrenal medulla and all brain regions, but not in visceral organs.

The protein localises to the cytoplasmic vesicle. It localises to the secretory vesicle. The protein resides in the chromaffin granule membrane. The enzyme catalyses monodehydro-L-ascorbate radical(out) + L-ascorbate(in) = monodehydro-L-ascorbate radical(in) + L-ascorbate(out). In terms of biological role, transmembrane reductase that uses ascorbate as an electron donor in the cytoplasm and transfers electrons across membranes to reduce monodehydro-L-ascorbate radical in the lumen of secretory vesicles. It is therefore involved the regeneration and homeostasis within secretory vesicles of ascorbate which in turn provides reducing equivalents needed to support the activity of intravesicular enzymes. The polypeptide is Transmembrane ascorbate-dependent reductase CYB561 (CYB561) (Bos taurus (Bovine)).